The primary structure comprises 194 residues: Methylated-DNA--protein-cysteine methyltransferase (194 aa).

Positions 125 and 139 each coordinate DNA. Cys156 functions as the Nucleophile; methyl group acceptor in the catalytic mechanism. Ser162 is a DNA binding site.

The protein belongs to the MGMT family.

Its subcellular location is the nucleus. The catalysed reaction is a 6-O-methyl-2'-deoxyguanosine in DNA + L-cysteinyl-[protein] = S-methyl-L-cysteinyl-[protein] + a 2'-deoxyguanosine in DNA. The enzyme catalyses a 4-O-methyl-thymidine in DNA + L-cysteinyl-[protein] = a thymidine in DNA + S-methyl-L-cysteinyl-[protein]. In terms of biological role, involved in the cellular defense against the biological effects of O6-methylguanine (O6-MeG) and O4-methylthymine (O4-MeT) in DNA. Repairs the methylated nucleobase in DNA by stoichiometrically transferring the methyl group to a cysteine residue in the enzyme. This is a suicide reaction: the enzyme is irreversibly inactivated. This chain is Methylated-DNA--protein-cysteine methyltransferase (MGT1), found in Scheffersomyces stipitis (strain ATCC 58785 / CBS 6054 / NBRC 10063 / NRRL Y-11545) (Yeast).